The primary structure comprises 489 residues: GTPase Der (489 aa).

EngA-type G domains lie at 30-199 and 227-403; these read PVVS…KDKP and FRLA…SRSH. Residues 36-43, 85-89, 151-154, 233-240, 280-284, and 345-348 contribute to the GTP site; these read GRQNVGKS, DTPGL, NKAD, GKPNSGKS, DTAGI, and NKWD. The 85-residue stretch at 404 to 488 folds into the KH-like domain; that stretch reads RKVSTSELNK…PIRLEFRSDR (85 aa).

The protein belongs to the TRAFAC class TrmE-Era-EngA-EngB-Septin-like GTPase superfamily. EngA (Der) GTPase family. Associates with the 50S ribosomal subunit.

Functionally, GTPase that plays an essential role in the late steps of ribosome biogenesis. The sequence is that of GTPase Der from Leptospira interrogans serogroup Icterohaemorrhagiae serovar Lai (strain 56601).